A 76-amino-acid chain; its full sequence is ATP synthase subunit 9, mitochondrial (76 aa).

The next 2 helical transmembrane spans lie at 11-31 (IGAG…GIVF) and 53-73 (ILGF…AFLI).

It belongs to the ATPase C chain family. In terms of assembly, F-type ATPases have 2 components, CF(1) - the catalytic core - and CF(0) - the membrane proton channel. CF(1) has five subunits: alpha(3), beta(3), gamma(1), delta(1), epsilon(1). CF(0) has three main subunits: a, b and c.

The protein resides in the mitochondrion membrane. Functionally, this protein is one of the chains of the nonenzymatic membrane component (F0) of mitochondrial ATPase. The chain is ATP synthase subunit 9, mitochondrial (ATP9) from Chondrus crispus (Carrageen Irish moss).